Reading from the N-terminus, the 422-residue chain is Adenylosuccinate synthetase (422 aa).

Residues 11 to 17 (GDEGKGK) and 39 to 41 (GHT) each bind GTP. Aspartate 12 serves as the catalytic Proton acceptor. Mg(2+) is bound by residues aspartate 12 and glycine 39. Residues 12 to 15 (DEGK), 37 to 40 (NAGH), threonine 129, arginine 143, asparagine 220, threonine 235, and arginine 299 contribute to the IMP site. Residue histidine 40 is the Proton donor of the active site. 295 to 301 (VTTGRKR) contacts substrate. GTP contacts are provided by residues arginine 301, 327–329 (KLD), and 410–412 (GTG).

Belongs to the adenylosuccinate synthetase family. In terms of assembly, homodimer. It depends on Mg(2+) as a cofactor.

Its subcellular location is the cytoplasm. It carries out the reaction IMP + L-aspartate + GTP = N(6)-(1,2-dicarboxyethyl)-AMP + GDP + phosphate + 2 H(+). Its pathway is purine metabolism; AMP biosynthesis via de novo pathway; AMP from IMP: step 1/2. In terms of biological role, plays an important role in the de novo pathway and in the salvage pathway of purine nucleotide biosynthesis. Catalyzes the first committed step in the biosynthesis of AMP from IMP. The protein is Adenylosuccinate synthetase of Arthroderma otae (strain ATCC MYA-4605 / CBS 113480) (Microsporum canis).